Reading from the N-terminus, the 531-residue chain is MSLRPSAKTEVRRNRYKVAVDAEEGRRRREDNLVEIRKNKREENLQKKRFTSSMAFGSATGQTEQDLSSANQLKDNLPAMVAGIWSEDSNSQLEATNLLRKLLSIEQNPPINEVVQSGVVPRVVKFLSRDDFPKLQFEAAWALTNIASGTSENTNVIIESGAVPIFIQLLSSASEDVREQAVWALGNVAGDSPKCRDLVLSYGAMTPLLSQFNENTKLSMLRNATWTLSNFCRGKPPPAFEQTQPALPVLERLVQSMDEEVLTDACWALSYLSDNSNDKIQAVIEAGVVPRLIQLLGHSSPSVLIPALRTIGNIVTGDDLQTQMVLDQQALPCLLNLLKNNYKKSIKKEACWTISNITAGNADQIQAVIDAGIIQSLVWVLQSAEFEVKKEAAWGISNATSGGTHDQIKFMVSQGCIKPLCDLLTCPDLKVVTVCLEALENILVVGEAEKNLGHTGEDNLYAQMIDEAEGLEKIENLQSHDNNDIYDKAVKILETFWTEDNEEEGNDENHAPQSGFQFGSTNVPPGQFNFI.

In terms of domain architecture, IBB spans 1–58; sequence MSLRPSAKTEVRRNRYKVAVDAEEGRRRREDNLVEIRKNKREENLQKKRFTSSMAFGS. 8 ARM repeats span residues 111 to 153, 154 to 198, 199 to 236, 237 to 281, 282 to 321, 322 to 364, 365 to 405, and 406 to 447; these read INEV…TSEN, TNVI…CRDL, VLSY…RGKP, PPAF…DKIQ, AVIE…DDLQ, TQMV…NADQ, IQAV…GGTH, and DQIK…VVGE. Residues 500-524 form a disordered region; sequence DNEEEGNDENHAPQSGFQFGSTNVP. Over residues 511 to 524 the composition is skewed to polar residues; it reads APQSGFQFGSTNVP.

Belongs to the importin alpha family. In terms of assembly, forms a complex with importin subunit beta-1. Interacts with PRL1. Interacts with A.tumefaciens VirD2 and VirE2.

It localises to the nucleus. Its function is as follows. Binds to conventional NLS motifs and mediates nuclear protein import across the nuclear envelope. Acts as a cellular receptor for the nuclear import of the virD2 protein of Agrobacterium, but is not essential for Agrobacterium-mediated root transformation. May be involved in the regulation of pathogen-induced salicylic acid accumulation. The sequence is that of Importin subunit alpha-3 from Arabidopsis thaliana (Mouse-ear cress).